Here is a 212-residue protein sequence, read N- to C-terminus: Large ribosomal subunit protein uL3 (212 aa).

At Gln153 the chain carries N5-methylglutamine.

This sequence belongs to the universal ribosomal protein uL3 family. In terms of assembly, part of the 50S ribosomal subunit. Forms a cluster with proteins L14 and L19. Post-translationally, methylated by PrmB.

One of the primary rRNA binding proteins, it binds directly near the 3'-end of the 23S rRNA, where it nucleates assembly of the 50S subunit. The polypeptide is Large ribosomal subunit protein uL3 (Azoarcus sp. (strain BH72)).